Reading from the N-terminus, the 159-residue chain is Ribosomal RNA large subunit methyltransferase H (159 aa).

Residues leucine 76, glycine 108, and 127 to 132 (FSKMTF) each bind S-adenosyl-L-methionine.

Belongs to the RNA methyltransferase RlmH family. Homodimer.

Its subcellular location is the cytoplasm. It catalyses the reaction pseudouridine(1915) in 23S rRNA + S-adenosyl-L-methionine = N(3)-methylpseudouridine(1915) in 23S rRNA + S-adenosyl-L-homocysteine + H(+). Its function is as follows. Specifically methylates the pseudouridine at position 1915 (m3Psi1915) in 23S rRNA. This chain is Ribosomal RNA large subunit methyltransferase H, found in Exiguobacterium sp. (strain ATCC BAA-1283 / AT1b).